Reading from the N-terminus, the 544-residue chain is Chaperonin GroEL (544 aa).

Residues 30-33 (TLGP), Lys51, 87-91 (DGTTT), Gly415, 481-483 (DAL), and Asp497 each bind ATP.

Belongs to the chaperonin (HSP60) family. As to quaternary structure, forms a cylinder of 14 subunits composed of two heptameric rings stacked back-to-back. Interacts with the co-chaperonin GroES.

It is found in the cytoplasm. It carries out the reaction ATP + H2O + a folded polypeptide = ADP + phosphate + an unfolded polypeptide.. Functionally, together with its co-chaperonin GroES, plays an essential role in assisting protein folding. The GroEL-GroES system forms a nano-cage that allows encapsulation of the non-native substrate proteins and provides a physical environment optimized to promote and accelerate protein folding. The polypeptide is Chaperonin GroEL (Chlamydia muridarum (strain MoPn / Nigg)).